The sequence spans 492 residues: FAD-linked oxidoreductase pgmH (492 aa).

The FAD-binding PCMH-type domain occupies 54 to 224; it reads SIRLATLVVY…TEFKYRVHKQ (171 aa).

The protein belongs to the oxygen-dependent FAD-linked oxidoreductase family. Requires FAD as cofactor.

It functions in the pathway pigment biosynthesis. Its pathway is secondary metabolite biosynthesis. Functionally, FAD-linked oxidoreductase; part of the gene cluster that mediates the biosynthesis of pleosporalin A, ascomycone A, as well as a third cryptic naphthoquinone derived pigment, all responsible for the coloration of conidia. Essential for the production of pleosporalin A, but not the 2 other final products. The pathway begins with the biosynthesis of the cyclized heptaketide 3-acetonyl-1,6,8-trihydroxy-2-naphthaldehyde by the NR-PKS pgmA. The C-6 hydroxyl group is further methylated by the O-methyltransferase pgmB to yield fusarubinaldehyde which is in turn oxidized by the cytochrome P450 monooxygenase pgmC at C-9. The C-1 hydroxyl group is then methylated spontaneously. Although pgmE, pgmD and pgmH are essential for the production of pleosporalin A, it is not the case for the 2 other final products and it remains difficult to assign a specific function to each enzyme. PgmF and pgmG seem not to be involved in pigment biosynthesis although they were regulated by the cluster-specific transcription factor pgmR. This chain is FAD-linked oxidoreductase pgmH, found in Aspergillus terreus.